The sequence spans 236 residues: Small ribosomal subunit protein uS2c (236 aa).

It belongs to the universal ribosomal protein uS2 family.

The protein resides in the plastid. It localises to the chloroplast. The chain is Small ribosomal subunit protein uS2c (rps2) from Acorus calamus var. americanus (American sweet flag).